The primary structure comprises 141 residues: Hemoglobin subunit alpha (141 aa).

The Globin domain maps to Val-1–Arg-141. Phosphoserine is present on Ser-3. Lys-7 is subject to N6-succinyllysine. Position 8 is a phosphothreonine (Thr-8). At Lys-11 the chain carries N6-succinyllysine. At Lys-16 the chain carries N6-acetyllysine; alternate. Residue Lys-16 is modified to N6-succinyllysine; alternate. Position 35 is a phosphoserine (Ser-35). Lys-40 carries the N6-succinyllysine modification. Phosphoserine is present on Ser-49. Position 58 (His-58) interacts with O2. Heme b is bound at residue His-87. Phosphoserine is present on Ser-102. Residue Thr-108 is modified to Phosphothreonine. A phosphoserine mark is found at Ser-124 and Ser-131. Residues Thr-134 and Thr-137 each carry the phosphothreonine modification. A Phosphoserine modification is found at Ser-138.

This sequence belongs to the globin family. Heterotetramer of two alpha chains and two beta chains. As to expression, red blood cells.

Involved in oxygen transport from the lung to the various peripheral tissues. The protein is Hemoglobin subunit alpha of Sciurus carolinensis (Eastern gray squirrel).